The sequence spans 1006 residues: Unconventional myosin-Id (1006 aa).

Position 2 is an N-acetylalanine (alanine 2). The region spanning 9–695 (FGKADFVLMD…TLFTLEELRA (687 aa)) is the Myosin motor domain. 102 to 109 (GESGAGKT) is a binding site for ATP. Phosphoserine is present on serine 200. Tyrosine 536 bears the Phosphotyrosine mark. The tract at residues 572–594 (MIALVDNLASKEPYYVRCIKPND) is actin-binding. 2 consecutive IQ domains span residues 699–719 (VRIV…MRYK) and 721–741 (TKAA…SYIH). The TH1 domain maps to 812–1005 (GQRADLGLQR…RSGFILSVPG (194 aa)).

This sequence belongs to the TRAFAC class myosin-kinesin ATPase superfamily. Myosin family. In terms of assembly, interacts (via the two IQ motifs) with calmodulin. Binds an additional calmodulin chain via a third, C-terminal region. Interacts with F-actin.

It is found in the cytoplasm. It localises to the perikaryon. The protein localises to the cell projection. Its subcellular location is the dendrite. The protein resides in the early endosome. It is found in the cell cortex. Functionally, unconventional myosin that functions as actin-based motor protein with ATPase activity. Plays a role in endosomal protein trafficking, and especially in the transfer of cargo proteins from early to recycling endosomes. Required for normal planar cell polarity in ciliated tracheal cells, for normal rotational polarity of cilia, and for coordinated, unidirectional ciliary movement in the trachea. Required for normal, polarized cilia organization in brain ependymal epithelial cells. The protein is Unconventional myosin-Id (MYO1D) of Bos taurus (Bovine).